We begin with the raw amino-acid sequence, 132 residues long: uncharacterized protein (132 aa).

The next 3 membrane-spanning stretches (helical) occupy residues 28–48 (LLRLISLCIPIIRPFSFLIYP), 59–79 (ILPSILPIIPFAISSSLLFSY), and 106–126 (LLVASFVYLPYRSPLPVVIEI).

The protein localises to the membrane. This is an uncharacterized protein from Schizosaccharomyces pombe (strain 972 / ATCC 24843) (Fission yeast).